A 173-amino-acid polypeptide reads, in one-letter code: Alpha-crystallin A chain (173 aa).

An N-acetylmethionine modification is found at Met1. Residues 1 to 63 (MDIAIQHPWF…RTVLDSGISE (63 aa)) are required for complex formation with BFSP1 and BFSP2. A Deamidated glutamine; partial modification is found at Gln6. N-linked (Glc) (glycation) lysine glycosylation is present at Lys11. Ser45 carries the post-translational modification Phosphoserine. The residue at position 50 (Gln50) is a Deamidated glutamine; partial. One can recognise a sHSP domain in the interval 52–162 (LFRTVLDSGI…GHSERAIPVS (111 aa)). Lys70 bears the N6-acetyllysine mark. Lys78 carries an N-linked (Glc) (glycation) lysine glycan. Residue Gln90 is modified to Deamidated glutamine; partial. Lys99 is subject to N6-acetyllysine. His100 lines the Zn(2+) pocket. Asn101 carries the deamidated asparagine; partial modification. Zn(2+)-binding residues include Glu102 and His107. Ser122 carries the post-translational modification Phosphoserine. Residue Asn123 is modified to Deamidated asparagine; partial. Positions 144 to 173 (PKIPSGVDAGHSERAIPVSREEKPSSAPSS) are disordered. Over residues 153-167 (GHSERAIPVSREEKP) the composition is skewed to basic and acidic residues. His154 is a binding site for Zn(2+). Residues 157–163 (RAIPVSR) form an important for oligomerization region. O-linked (GlcNAc) serine glycosylation is present at Ser162.

The protein belongs to the small heat shock protein (HSP20) family. In terms of assembly, heteromer composed of three CRYAA and one CRYAB subunits. Inter-subunit bridging via zinc ions enhances stability, which is crucial as there is no protein turn over in the lens. Can also form homodimers and homotetramers (dimers of dimers) which serve as the building blocks of homooligomers. Within homooligomers, the zinc-binding motif is created from residues of 3 different molecules. His-100 and Glu-102 from one molecule are ligands of the zinc ion, and His-107 and His-154 residues from additional molecules complete the site with tetrahedral coordination geometry. Part of a complex required for lens intermediate filament formation composed of BFSP1, BFSP2 and CRYAA. In terms of processing, acetylation at Lys-70 may increase chaperone activity. Post-translationally, undergoes age-dependent proteolytical cleavage at the C-terminus.

Its subcellular location is the cytoplasm. The protein localises to the nucleus. Its function is as follows. Contributes to the transparency and refractive index of the lens. Acts as a chaperone, preventing aggregation of various proteins under a wide range of stress conditions. Required for the correct formation of lens intermediate filaments as part of a complex composed of BFSP1, BFSP2 and CRYAA. This is Alpha-crystallin A chain (CRYAA) from Bos taurus (Bovine).